The primary structure comprises 64 residues: Large ribosomal subunit protein bL35 (64 aa).

Basic residues predominate over residues 1 to 15 (MPKNKTHSGTAKRFR). Residues 1 to 27 (MPKNKTHSGTAKRFRVTGSGKLRREQA) are disordered.

It belongs to the bacterial ribosomal protein bL35 family.

In Saccharopolyspora erythraea (strain ATCC 11635 / DSM 40517 / JCM 4748 / NBRC 13426 / NCIMB 8594 / NRRL 2338), this protein is Large ribosomal subunit protein bL35.